Here is a 634-residue protein sequence, read N- to C-terminus: Threonine--tRNA ligase (634 aa).

Residues 1–61 (MINIRFPDGS…NSNCELRLIT (61 aa)) enclose the TGS domain. Positions 241-532 (DHRKIGKVLD…LIEHYAGNLP (292 aa)) are catalytic. Zn(2+)-binding residues include cysteine 332, histidine 383, and histidine 509.

This sequence belongs to the class-II aminoacyl-tRNA synthetase family. In terms of assembly, homodimer. It depends on Zn(2+) as a cofactor.

The protein localises to the cytoplasm. The catalysed reaction is tRNA(Thr) + L-threonine + ATP = L-threonyl-tRNA(Thr) + AMP + diphosphate + H(+). Catalyzes the attachment of threonine to tRNA(Thr) in a two-step reaction: L-threonine is first activated by ATP to form Thr-AMP and then transferred to the acceptor end of tRNA(Thr). Also edits incorrectly charged L-seryl-tRNA(Thr). In Francisella tularensis subsp. tularensis (strain WY96-3418), this protein is Threonine--tRNA ligase.